The sequence spans 218 residues: Large ribosomal subunit protein bL25 (218 aa).

Residues 187 to 218 form a disordered region; the sequence is SATAAVEEAKEDGAPEESAQGQGAAEAQETGK. Positions 202–218 are enriched in low complexity; sequence EESAQGQGAAEAQETGK.

The protein belongs to the bacterial ribosomal protein bL25 family. CTC subfamily. As to quaternary structure, part of the 50S ribosomal subunit; part of the 5S rRNA/L5/L18/L25 subcomplex. Contacts the 5S rRNA. Binds to the 5S rRNA independently of L5 and L18.

This is one of the proteins that binds to the 5S RNA in the ribosome where it forms part of the central protuberance. In Anaplasma marginale (strain Florida), this protein is Large ribosomal subunit protein bL25.